The chain runs to 947 residues: Bifunctional glutamine synthetase adenylyltransferase/adenylyl-removing enzyme (947 aa).

Residues 1 to 440 (MTPLSSPLSQ…VFNELIGDDE (440 aa)) are adenylyl removase. The interval 450–947 (SEPWREVWQD…ASWRKWLVAV (498 aa)) is adenylyl transferase.

This sequence belongs to the GlnE family. It depends on Mg(2+) as a cofactor.

It catalyses the reaction [glutamine synthetase]-O(4)-(5'-adenylyl)-L-tyrosine + phosphate = [glutamine synthetase]-L-tyrosine + ADP. It carries out the reaction [glutamine synthetase]-L-tyrosine + ATP = [glutamine synthetase]-O(4)-(5'-adenylyl)-L-tyrosine + diphosphate. Functionally, involved in the regulation of glutamine synthetase GlnA, a key enzyme in the process to assimilate ammonia. When cellular nitrogen levels are high, the C-terminal adenylyl transferase (AT) inactivates GlnA by covalent transfer of an adenylyl group from ATP to specific tyrosine residue of GlnA, thus reducing its activity. Conversely, when nitrogen levels are low, the N-terminal adenylyl removase (AR) activates GlnA by removing the adenylyl group by phosphorolysis, increasing its activity. The regulatory region of GlnE binds the signal transduction protein PII (GlnB) which indicates the nitrogen status of the cell. The chain is Bifunctional glutamine synthetase adenylyltransferase/adenylyl-removing enzyme from Salmonella schwarzengrund (strain CVM19633).